A 133-amino-acid chain; its full sequence is U-scoloptoxin(11)-Sm1a (133 aa).

An N-terminal signal peptide occupies residues 1-19 (MIWFLAFILFLAAGELVSS).

Belongs to the scoloptoxin-11 family. Contains 10 disulfide bonds. As to expression, expressed by the venom gland.

It is found in the secreted. This chain is U-scoloptoxin(11)-Sm1a, found in Scolopendra morsitans (Tanzanian blue ringleg centipede).